The chain runs to 316 residues: L-lactate dehydrogenase (316 aa).

Residues 13–15 (GMI), 34–36 (FDI), tyrosine 67, and 79–83 (TAGFT) each bind NAD(+). Residue arginine 95 coordinates substrate. NAD(+)-binding positions include 125–127 (VTN), leucine 150, and leucine 154. Arginine 158 and histidine 182 together coordinate substrate. Residue histidine 182 coordinates NAD(+). Histidine 182 acts as the Proton acceptor in catalysis.

The protein belongs to the LDH/MDH superfamily. LDH family. Homotetramer.

It catalyses the reaction (S)-lactate + NAD(+) = pyruvate + NADH + H(+). It functions in the pathway fermentation; pyruvate fermentation to lactate; (S)-lactate from pyruvate: step 1/1. In Plasmodium berghei, this protein is L-lactate dehydrogenase.